Here is a 103-residue protein sequence, read N- to C-terminus: MSKEYRGRRIVLWPANIDSTLSRSEGRKIPLRDAVRKPRVEEIVEAANRLGLNPTVEEAAYPRSWWEQRKRVVVDKVGSKLNTLRMIAQEVKKLREERRRLGK.

It belongs to the SRP19 family. Part of the signal recognition particle protein translocation system, which is composed of SRP and FtsY. Archaeal SRP consists of a 7S RNA molecule of 300 nucleotides and two protein subunits: SRP54 and SRP19.

Its subcellular location is the cytoplasm. Involved in targeting and insertion of nascent membrane proteins into the cytoplasmic membrane. Binds directly to 7S RNA and mediates binding of the 54 kDa subunit of the SRP. The polypeptide is Signal recognition particle 19 kDa protein (Hyperthermus butylicus (strain DSM 5456 / JCM 9403 / PLM1-5)).